Here is a 287-residue protein sequence, read N- to C-terminus: MELWPGAGTLLLLLFLLLLLLLPTLWFCSPSAKYFFKMAFYNGWILFLAVLAIPVCAVRGRNVENMKILRLMLLHIKYLYGIRVEVRGAHHFPPSQPYVVVSNHQSSLDLLGMMEVLPGHCVPIAKRELLWAGSAGLACWLAGVIFIDRKRTGDAISVMSEVAQTLLTQDVRVWVFPEGTRNHNGSMLPFKRGAFHLAVQAQVPIVPIVMSSYQDFYCKKERRFTSGRCQVRVLPPVPTEGLKPDDVPALADRVRHSMLTVFREISTDGRGGGDYLKKPGGVGEAGL.

Positions 1 to 26 (MELWPGAGTLLLLLFLLLLLLLPTLW) are cleaved as a signal peptide. The Lumenal portion of the chain corresponds to 27-37 (FCSPSAKYFFK). Residues 38–58 (MAFYNGWILFLAVLAIPVCAV) form a helical membrane-spanning segment. Over 59–127 (RGRNVENMKI…PGHCVPIAKR (69 aa)) the chain is Cytoplasmic. The short motif at 104 to 109 (HQSSLD) is the HXXXXD motif element. Residues 128-148 (ELLWAGSAGLACWLAGVIFID) traverse the membrane as a helical segment. Over 149-192 (RKRTGDAISVMSEVAQTLLTQDVRVWVFPEGTRNHNGSMLPFKR) the chain is Lumenal. The short motif at 178-181 (EGTR) is the EGTR motif element.

Belongs to the 1-acyl-sn-glycerol-3-phosphate acyltransferase family.

Its subcellular location is the endoplasmic reticulum membrane. It carries out the reaction a 1-acyl-sn-glycero-3-phosphate + an acyl-CoA = a 1,2-diacyl-sn-glycero-3-phosphate + CoA. The enzyme catalyses 1-(9Z-octadecenoyl)-sn-glycero-3-phosphate + (9Z)-octadecenoyl-CoA = 1,2-di-(9Z-octadecenoyl)-sn-glycero-3-phosphate + CoA. The catalysed reaction is 1-(9Z-octadecenoyl)-sn-glycero-3-phosphate + hexadecanoyl-CoA = 1-(9Z)-octadecenoyl-2-hexadecanoyl-sn-glycero-3-phosphate + CoA. It catalyses the reaction heptadecanoyl-CoA + 1-(9Z-octadecenoyl)-sn-glycero-3-phosphate = 1-(9Z)-octadecenoyl-2-heptadecanoyl-sn-glycero-3-phosphate + CoA. It carries out the reaction 1-(9Z-octadecenoyl)-sn-glycero-3-phosphate + octadecanoyl-CoA = 1-(9Z-octadecenoyl)-2-octadecanoyl-sn-glycero-3-phosphate + CoA. The enzyme catalyses 1-(9Z-octadecenoyl)-sn-glycero-3-phosphate + (9Z,12Z)-octadecadienoyl-CoA = 1-(9Z)-octadecenoyl-2-(9Z,12Z)-octadecadienoyl-sn-glycero-3-phosphate + CoA. The catalysed reaction is 1-(9Z-octadecenoyl)-sn-glycero-3-phosphate + tetradecanoyl-CoA = 1-(9Z)-octadecenoyl-2-tetradecanoyl-sn-glycero-3-phosphate + CoA. It catalyses the reaction pentadecanoyl-CoA + 1-(9Z-octadecenoyl)-sn-glycero-3-phosphate = 1-(9Z)-octadecenoyl-2-pentadecanoyl-sn-glycero-3-phosphate + CoA. It carries out the reaction 1-hexadecanoyl-sn-glycero-3-phosphate + (9Z)-octadecenoyl-CoA = 1-hexadecanoyl-2-(9Z-octadecenoyl)-sn-glycero-3-phosphate + CoA. The enzyme catalyses 1-(9Z,12Z,15Z)-octadecatrienoyl-sn-glycero-3-phosphate + (9Z)-octadecenoyl-CoA = 1-(9Z,12Z,15Z)-octadecatrienoyl-2-(9Z)-octadecenoyl-sn-glycero-3-phosphate + CoA. The catalysed reaction is 1-(6Z,9Z,12Z-octadecatrienoyl)-sn-glycero-3-phosphate + (9Z)-octadecenoyl-CoA = (6Z,9Z,12Z)-octadecatrienoyl-2-(9Z)-octadecenoyl-sn-glycero-3-phosphate + CoA. It catalyses the reaction 1-eicosanoyl-sn-glycero-3-phosphate + (9Z)-octadecenoyl-CoA = 1-eicosanoyl-2-(9Z)-octadecenoyl-sn-glycero-3-phosphate + CoA. It carries out the reaction 1-tetradecanoyl-sn-glycerol 3-phosphate + (9Z)-octadecenoyl-CoA = 1-tetradecanoyl-2-(9Z)-octadecenoyl-sn-glycero-3-phosphate + CoA. The enzyme catalyses 1-(9Z-octadecenoyl)-sn-glycero-3-phosphate + (5Z,8Z,11Z,14Z)-eicosatetraenoyl-CoA = 1-(9Z)-octadecenoyl-2-(5Z,8Z,11Z,14Z)-eicosatetraenoyl-sn-glycero-3-phosphate + CoA. The catalysed reaction is 1-(9Z-octadecenoyl)-sn-glycero-3-phosphate + dodecanoyl-CoA = 1-(9Z)-octadecenoyl-2-dodecanoyl-sn-glycero-3-phosphate + CoA. It catalyses the reaction (6Z)-octadecenoyl-CoA + 1-(9Z-octadecenoyl)-sn-glycero-3-phosphate = 1-(9Z)-octadecenoyl-2-(6Z)-octadecenoyl-sn-glycero-3-phosphate + CoA. It carries out the reaction (11Z)-octadecenoyl-CoA + 1-(9Z-octadecenoyl)-sn-glycero-3-phosphate = 1-(9Z)-octadecenoyl-2-(11Z)-octadecenoyl-sn-glycero-3-phosphate + CoA. The enzyme catalyses (9Z)-hexadecenoyl-CoA + 1-(9Z-octadecenoyl)-sn-glycero-3-phosphate = 1-(9Z-octadecenoyl)-2-(9Z-hexadecenoyl)-sn-glycero-3-phosphate + CoA. Its pathway is phospholipid metabolism; CDP-diacylglycerol biosynthesis; CDP-diacylglycerol from sn-glycerol 3-phosphate: step 2/3. In terms of biological role, converts 1-acyl-sn-glycerol-3-phosphate (lysophosphatidic acid or LPA) into 1,2-diacyl-sn-glycerol-3-phosphate (phosphatidic acid or PA) by incorporating an acyl moiety at the sn-2 position of the glycerol backbone. This is 1-acyl-sn-glycerol-3-phosphate acyltransferase alpha (AGPAT1) from Ovis aries (Sheep).